Consider the following 201-residue polypeptide: MSKQALRVGIGGPVGSGKTALTLALCQALREQIDMAVVTNDIYTAEDAKFLVNHSALAPERIIGVETGGCPHTAIREDASINLEAIDRLQRAFPAVELILVESGGDNLAATFSPELSDLTIYVIDVAAGEKIPRKGGPGITKSDLLVINKIDLAPMVGASLEVMAHDAKVQRGERPFVFTNLKTGHGLETIIEFIREKGML.

Residue 12 to 19 participates in GTP binding; it reads GPVGSGKT.

The protein belongs to the SIMIBI class G3E GTPase family. UreG subfamily. Homodimer. UreD, UreF and UreG form a complex that acts as a GTP-hydrolysis-dependent molecular chaperone, activating the urease apoprotein by helping to assemble the nickel containing metallocenter of UreC. The UreE protein probably delivers the nickel.

Its subcellular location is the cytoplasm. Facilitates the functional incorporation of the urease nickel metallocenter. This process requires GTP hydrolysis, probably effectuated by UreG. The sequence is that of Urease accessory protein UreG from Dechloromonas aromatica (strain RCB).